The sequence spans 80 residues: Ubiquitin-like protein NEDD8-like protein 2 (80 aa).

It belongs to the ubiquitin family.

This chain is Ubiquitin-like protein NEDD8-like protein 2 (nedd8l2), found in Dictyostelium discoideum (Social amoeba).